Consider the following 285-residue polypeptide: Protease HtpX homolog (285 aa).

2 consecutive transmembrane segments (helical) span residues 7–27 (TAML…MIGG) and 30–50 (GMTI…WFSD). A Zn(2+)-binding site is contributed by H131. The active site involves E132. H135 is a Zn(2+) binding site. 2 consecutive transmembrane segments (helical) span residues 146–166 (ITAT…FFGG) and 177–197 (IAGI…QMAI). Residue E202 coordinates Zn(2+).

The protein belongs to the peptidase M48B family. Zn(2+) serves as cofactor.

Its subcellular location is the cell inner membrane. This is Protease HtpX homolog from Burkholderia cenocepacia (strain HI2424).